The chain runs to 160 residues: Putative pre-16S rRNA nuclease (160 aa).

This sequence belongs to the YqgF nuclease family.

Its subcellular location is the cytoplasm. Its function is as follows. Could be a nuclease involved in processing of the 5'-end of pre-16S rRNA. The protein is Putative pre-16S rRNA nuclease of Jannaschia sp. (strain CCS1).